The chain runs to 284 residues: Bifunctional protein FolD (284 aa).

NADP(+) contacts are provided by residues 166-168 (GAS) and isoleucine 232.

The protein belongs to the tetrahydrofolate dehydrogenase/cyclohydrolase family. In terms of assembly, homodimer.

The catalysed reaction is (6R)-5,10-methylene-5,6,7,8-tetrahydrofolate + NADP(+) = (6R)-5,10-methenyltetrahydrofolate + NADPH. The enzyme catalyses (6R)-5,10-methenyltetrahydrofolate + H2O = (6R)-10-formyltetrahydrofolate + H(+). It functions in the pathway one-carbon metabolism; tetrahydrofolate interconversion. Its function is as follows. Catalyzes the oxidation of 5,10-methylenetetrahydrofolate to 5,10-methenyltetrahydrofolate and then the hydrolysis of 5,10-methenyltetrahydrofolate to 10-formyltetrahydrofolate. In Glaesserella parasuis serovar 5 (strain SH0165) (Haemophilus parasuis), this protein is Bifunctional protein FolD.